The chain runs to 317 residues: Ribosomal RNA small subunit methyltransferase H (317 aa).

S-adenosyl-L-methionine is bound by residues 30–32, Asp-50, Tyr-74, Asp-95, and Gln-102; that span reads GGH.

Belongs to the methyltransferase superfamily. RsmH family.

Its subcellular location is the cytoplasm. The enzyme catalyses cytidine(1402) in 16S rRNA + S-adenosyl-L-methionine = N(4)-methylcytidine(1402) in 16S rRNA + S-adenosyl-L-homocysteine + H(+). Its function is as follows. Specifically methylates the N4 position of cytidine in position 1402 (C1402) of 16S rRNA. The protein is Ribosomal RNA small subunit methyltransferase H of Nitrosomonas europaea (strain ATCC 19718 / CIP 103999 / KCTC 2705 / NBRC 14298).